The primary structure comprises 382 residues: Glycerate kinase (382 aa).

This sequence belongs to the glycerate kinase type-1 family.

It carries out the reaction (R)-glycerate + ATP = (2R)-3-phosphoglycerate + ADP + H(+). In Bacillus subtilis (strain 168), this protein is Glycerate kinase (glxK).